A 274-amino-acid polypeptide reads, in one-letter code: MGTLSVNQNKLQKRLRRLAGEAITDFNMIEDGDKVMVCLSGGKDSYTMLDILLYLQKVAPIRFEIVAVNMDQKQPGFPEHVLPEYLKSIGVEYHIVEKDTYSVVKEKIPEGKTTCSLCSRLRRGTLYTFADEIGATKMALGHHRDDILETFFLNMFYGGTLKAMPPKLLADDGRNVVIRPLAYCSEKDIEAYSQLKEFPIIPCNLCGSQENLQRQVVKEMLLEWERKSPGRTEIMFRALQNVVPSQLADRNLFDFASLRIDESATPRFLDVMNL.

The short motif at 40–45 (SGGKDS) is the PP-loop motif element. The [4Fe-4S] cluster site is built by Cys-115, Cys-118, and Cys-206.

Belongs to the TtcA family. As to quaternary structure, homodimer. It depends on Mg(2+) as a cofactor. Requires [4Fe-4S] cluster as cofactor.

It is found in the cytoplasm. The catalysed reaction is cytidine(32) in tRNA + S-sulfanyl-L-cysteinyl-[cysteine desulfurase] + AH2 + ATP = 2-thiocytidine(32) in tRNA + L-cysteinyl-[cysteine desulfurase] + A + AMP + diphosphate + H(+). Its pathway is tRNA modification. In terms of biological role, catalyzes the ATP-dependent 2-thiolation of cytidine in position 32 of tRNA, to form 2-thiocytidine (s(2)C32). The sulfur atoms are provided by the cysteine/cysteine desulfurase (IscS) system. In Pseudomonas paraeruginosa (strain DSM 24068 / PA7) (Pseudomonas aeruginosa (strain PA7)), this protein is tRNA-cytidine(32) 2-sulfurtransferase.